A 384-amino-acid chain; its full sequence is MSLQAIKYFDNQLQIIDQLQLPFVTEYIPIRSAQDGWYAIKEMRVRGAPAIAIVAILSLAVELNEIHTAGKLSSSSEEVGLFIIEKLHYLVTSRPTAVNLADAARKFENMVTEHTRAQDSTGQSLVAAYLKEAELMLVHDLSDNQNIGEYGAKWILERAATQGQNKVNVLTHCNTGSLATAGYGTALGVIRSLHAKNALNRVYCTETRPYNQGARLTAYELVHEKMPATLITDSMAASLLAKSHSKVSAIVVGADRVAANGDTANKIGTYALAVLAKYHGVKFLVAAPRTTIDRGTLTGTEIVIEERAPSEVTTIKGPLQGRVGDTLQMETIQLAATGIDVWNPAFDVTPAALIDAVITEKGVVEKGSDGFFHFDALFEESASS.

D255 acts as the Proton donor in catalysis.

It belongs to the eIF-2B alpha/beta/delta subunits family. MtnA subfamily.

Its subcellular location is the cytoplasm. The protein localises to the nucleus. It catalyses the reaction 5-(methylsulfanyl)-alpha-D-ribose 1-phosphate = 5-(methylsulfanyl)-D-ribulose 1-phosphate. Its pathway is amino-acid biosynthesis; L-methionine biosynthesis via salvage pathway; L-methionine from S-methyl-5-thio-alpha-D-ribose 1-phosphate: step 1/6. Functionally, catalyzes the interconversion of methylthioribose-1-phosphate (MTR-1-P) into methylthioribulose-1-phosphate (MTRu-1-P). In Talaromyces stipitatus (strain ATCC 10500 / CBS 375.48 / QM 6759 / NRRL 1006) (Penicillium stipitatum), this protein is Methylthioribose-1-phosphate isomerase (mri1).